The primary structure comprises 1247 residues: Protein jagged-2 (1247 aa).

Residues 1–23 form the signal peptide; it reads MRARGWGRLPRRLLLLLVLCVQA. Residues 24–1082 lie on the Extracellular side of the membrane; that stretch reads TRPMGYFELQ…ETVVMGGSST (1059 aa). The N-linked (GlcNAc...) asparagine glycan is linked to N153. The 45-residue stretch at 196–240 folds into the DSL domain; it reads VRCDENYYSATCNKFCRPRNDFFGHYTCDQYGNKACMDGWMGKEC. 42 cysteine pairs are disulfide-bonded: C198–C207, C211–C223, C231–C240, C245–C256, C249–C262, C264–C273, C276–C287, C282–C293, C295–C304, C311–C323, C317–C333, C335–C344, C351–C362, C356–C371, C373–C382, C389–C400, C394–C409, C411–C420, C427–C438, C432–C447, C449–C458, C465–C475, C469–C484, C486–C495, C502–C513, C507–C522, C524–C533, C540–C551, C545–C560, C562–C571, C589–C612, C606–C622, C624–C633, C640–C651, C645–C660, C662–C671, C678–C689, C683–C698, C700–C709, C716–C727, C721–C736, and C738–C747. The EGF-like 1 domain occupies 241 to 274; sequence KEAVCKQGCNLLHGGCTVPGECRCSYGWQGKFCD. The EGF-like 2; atypical domain maps to 275-305; it reads ECVPYPGCVHGSCVEPWHCDCETNWGGLLCD. 2 EGF-like domains span residues 307–345 and 347–383; these read DLNY…KNCE and AEHA…PTCA. The region spanning 385 to 421 is the EGF-like 5; calcium-binding domain; the sequence is DIDECASNPCAAGGTCVDQVDGFECICPEQWVGATCQ. The 37-residue stretch at 423–459 folds into the EGF-like 6; calcium-binding domain; that stretch reads DANECEGKPCLNAFSCKNLIGGYYCDCLPGWKGINCQ. An EGF-like 7; calcium-binding domain is found at 461-496; the sequence is NINDCHGQCQHGGTCKDLVNGYQCVCPRGFGGRHCE. 2 EGF-like domains span residues 498–534 and 536–572; these read EYDK…LHCE and DMDL…KNCS. N-linked (GlcNAc...) asparagine glycosylation is present at N570. Positions 574–634 constitute an EGF-like 10; atypical domain; that stretch reads PRDTCPGGAC…DSGFTGTYCH (61 aa). N619 carries an N-linked (GlcNAc...) asparagine glycan. Residues 636–672 enclose the EGF-like 11; calcium-binding domain; it reads NIDDCMGQPCRNGGTCIDEVDSFRCFCPSGWEGELCD. An EGF-like 12; calcium-binding domain is found at 674-710; that stretch reads NPNDCLPDPCHSRGRCYDLVNDFYCACDDGWKGKTCH. 2 consecutive EGF-like domains span residues 712 to 748 and 751 to 787; these read REFQ…STCT and KNSS…RTCT. N752 carries an N-linked (GlcNAc...) asparagine glycan. 9 cysteine pairs are disulfide-bonded: C755/C766, C760/C775, C777/C786, C793/C804, C798/C813, C815/C824, C831/C842, C836/C851, and C853/C862. The region spanning 789-825 is the EGF-like 15; calcium-binding domain; it reads NTNDCNPLPCYNGGICVDGVNWFRCECAPGFAGPDCR. One can recognise an EGF-like 16; calcium-binding domain in the interval 827–863; the sequence is NIDECQSSPCAYGATCVDEINGYRCSCPPGRSGPRCQ. N-linked (GlcNAc...) asparagine glycosylation occurs at N1060. A helical membrane pass occupies residues 1083–1103; that stretch reads GLLVPVLCSVFSVLWLACVVI. Residues 1104 to 1247 lie on the Cytoplasmic side of the membrane; that stretch reads CVWWTRKRRK…TKDVRRAGRE (144 aa). Basic and acidic residues-rich tracts occupy residues 1115 to 1125, 1192 to 1212, and 1230 to 1247; these read RERSRLPRDES, LSRG…KFTK, and VDNR…AGRE. Disordered regions lie at residues 1115–1148 and 1167–1247; these read RERS…GSGL and PRRA…AGRE. A Phosphoserine modification is found at S1125.

In terms of tissue distribution, found to be highest in fetal thymus, epidermis, foregut dorsal root ganglia and inner ear. In 2-weeK-old mice, abundant in heart, lung, thymus, skeletal muscle, brain and testis. Expression overlaps partially with Notch1 expression.

The protein localises to the membrane. Its function is as follows. Putative Notch ligand involved in the mediation of Notch signaling. Plays an essential role during limb, craniofacial and thymic development. May be involved in myogenesis and in the development of peripheral and central nervous systems. This Mus musculus (Mouse) protein is Protein jagged-2 (Jag2).